A 305-amino-acid polypeptide reads, in one-letter code: Oxygen-dependent coproporphyrinogen-III oxidase (305 aa).

Substrate is bound at residue Ser-93. Residues His-97 and His-107 each coordinate a divalent metal cation. The active-site Proton donor is His-107. 109–111 lines the substrate pocket; the sequence is NVR. A divalent metal cation is bound by residues His-146 and His-176. The important for dimerization stretch occupies residues 241-276; that stretch reads YVEFNLVFDRGTLFGLQSGGRTESILMSLPPQVRWG. 259–261 contacts substrate; that stretch reads GGR.

Belongs to the aerobic coproporphyrinogen-III oxidase family. In terms of assembly, homodimer. A divalent metal cation is required as a cofactor.

Its subcellular location is the cytoplasm. The enzyme catalyses coproporphyrinogen III + O2 + 2 H(+) = protoporphyrinogen IX + 2 CO2 + 2 H2O. Its pathway is porphyrin-containing compound metabolism; protoporphyrin-IX biosynthesis; protoporphyrinogen-IX from coproporphyrinogen-III (O2 route): step 1/1. Its function is as follows. Involved in the heme biosynthesis. Catalyzes the aerobic oxidative decarboxylation of propionate groups of rings A and B of coproporphyrinogen-III to yield the vinyl groups in protoporphyrinogen-IX. In Pseudomonas paraeruginosa (strain DSM 24068 / PA7) (Pseudomonas aeruginosa (strain PA7)), this protein is Oxygen-dependent coproporphyrinogen-III oxidase.